The sequence spans 356 residues: Cyclin-D2-2 (356 aa).

The span at 325-343 (LGSSQSNSNNKDYNSQDSA) shows a compositional bias: polar residues. The interval 325–356 (LGSSQSNSNNKDYNSQDSAPASKRRRLNTTPI) is disordered. Over residues 346-356 (SKRRRLNTTPI) the composition is skewed to basic residues.

This sequence belongs to the cyclin family. Cyclin D subfamily.

The protein is Cyclin-D2-2 (CYCD2-2) of Oryza sativa subsp. japonica (Rice).